A 273-amino-acid chain; its full sequence is 2,3,4,5-tetrahydropyridine-2,6-dicarboxylate N-succinyltransferase (273 aa).

The substrate site is built by arginine 106 and aspartate 143.

It belongs to the transferase hexapeptide repeat family. Homotrimer.

It localises to the cytoplasm. The catalysed reaction is (S)-2,3,4,5-tetrahydrodipicolinate + succinyl-CoA + H2O = (S)-2-succinylamino-6-oxoheptanedioate + CoA. It functions in the pathway amino-acid biosynthesis; L-lysine biosynthesis via DAP pathway; LL-2,6-diaminopimelate from (S)-tetrahydrodipicolinate (succinylase route): step 1/3. The sequence is that of 2,3,4,5-tetrahydropyridine-2,6-dicarboxylate N-succinyltransferase from Wolbachia sp. subsp. Brugia malayi (strain TRS).